The following is a 212-amino-acid chain: Uracil phosphoribosyltransferase (212 aa).

5-phospho-alpha-D-ribose 1-diphosphate-binding positions include Arg-78, Arg-103, and 130–138 (DPMLATGSS). Residues Ile-193 and 198–200 (GDA) each bind uracil. Asp-199 serves as a coordination point for 5-phospho-alpha-D-ribose 1-diphosphate.

This sequence belongs to the UPRTase family. Mg(2+) serves as cofactor.

The enzyme catalyses UMP + diphosphate = 5-phospho-alpha-D-ribose 1-diphosphate + uracil. The protein operates within pyrimidine metabolism; UMP biosynthesis via salvage pathway; UMP from uracil: step 1/1. Allosterically activated by GTP. Catalyzes the conversion of uracil and 5-phospho-alpha-D-ribose 1-diphosphate (PRPP) to UMP and diphosphate. This is Uracil phosphoribosyltransferase from Pseudomonas fluorescens (strain ATCC BAA-477 / NRRL B-23932 / Pf-5).